A 657-amino-acid polypeptide reads, in one-letter code: Protein translocase subunit SecA 2 (657 aa).

ATP contacts are provided by residues Q93, 111–115 (GEGKT), and D531.

It belongs to the SecA family. As to quaternary structure, monomer and homodimer. Part of the essential Sec protein translocation apparatus which comprises SecA, SecYEG and auxiliary proteins SecDF. Other proteins may also be involved.

The protein localises to the cell inner membrane. It is found in the cytoplasm. It carries out the reaction ATP + H2O + cellular proteinSide 1 = ADP + phosphate + cellular proteinSide 2.. In terms of biological role, part of the Sec protein translocase complex. Interacts with the SecYEG preprotein conducting channel. Has a central role in coupling the hydrolysis of ATP to the transfer of proteins into and across the cell membrane, serving as an ATP-driven molecular motor driving the stepwise translocation of polypeptide chains across the membrane. The sequence is that of Protein translocase subunit SecA 2 from Rhodopirellula baltica (strain DSM 10527 / NCIMB 13988 / SH1).